The following is a 908-amino-acid chain: Glutamate receptor ionotropic, kainate 2 (908 aa).

Residues 1 to 31 form the signal peptide; sequence MQRIAGITKMVTHRRWLGLLLLLLCVGYSHG. At 32–561 the chain is on the extracellular side; that stretch reads MPHVLRFGGI…VFSFLNPLSP (530 aa). Asn67, Asn73, Asn275, Asn378, Asn412, Asn423, and Asn430 each carry an N-linked (GlcNAc...) asparagine glycan. Cys96 and Cys347 are oxidised to a cystine. L-glutamate is bound by residues Pro516, Ala518, and Arg523. Asn546 carries N-linked (GlcNAc...) asparagine glycosylation. The chain crosses the membrane as a helical span at residues 562 to 582; sequence DIWMYILLAYLGVSCVLFVIA. At 583–638 the chain is on the cytoplasmic side; that stretch reads RFSPYEWYNPHPCNPDSDVVENNFTLLNSFWFGVGALMQQGSELMPKALSTRIVGG. The helical transmembrane segment at 639 to 659 threads the bilayer; it reads IWWFFTLIIISSYTANLAAFL. At 660–819 the chain is on the extracellular side; that stretch reads TVERMESPID…KEASALGVQN (160 aa). L-glutamate contacts are provided by Ser689, Thr690, and Glu738. A disulfide bond links Cys750 and Cys804. Asn751 carries an N-linked (GlcNAc...) asparagine glycan. A helical membrane pass occupies residues 820-840; it reads IGGIFIVLAAGLVLSVFVAVG. Residues 841-908 lie on the Cytoplasmic side of the membrane; the sequence is EFLYKSKQNA…RRLPGKETMA (68 aa).

This sequence belongs to the glutamate-gated ion channel (TC 1.A.10.1) family. GRIK2 subfamily. Homotetramer and heterotetramer with GRIK5. Tetramers may be formed by the dimerization of dimers.

It localises to the cell membrane. The protein localises to the postsynaptic cell membrane. The catalysed reaction is Ca(2+)(in) = Ca(2+)(out). It carries out the reaction Na(+)(in) = Na(+)(out). Cold receptor activity activated by temperatures between 10-19 degrees Celsius. Ionotropic glutamate receptor that functions as a cation-permeable ligand-gated ion channel, gated by L-glutamate and the glutamatergic agonist kainic acid. L-glutamate acts as an excitatory neurotransmitter at many synapses in the central nervous system. Binding of the excitatory neurotransmitter L-glutamate induces a conformation change, leading to the opening of the cation channel, and thereby converts the chemical signal to an electrical impulse. The receptor then desensitizes rapidly and enters a transient inactive state, characterized by the presence of bound agonist. Its function is as follows. Independent of its ionotropic glutamate receptor activity, acts as a thermoreceptor conferring sensitivity to cold temperatures. Functions in dorsal root ganglion neurons. In Danio rerio (Zebrafish), this protein is Glutamate receptor ionotropic, kainate 2.